Here is a 728-residue protein sequence, read N- to C-terminus: Leucine-rich repeat and calponin homology domain-containing protein 1 (728 aa).

Over residues His24–His36 the composition is skewed to basic residues. The disordered stretch occupies residues His24 to Leu57. Residues Gly37–Gly54 are compositionally biased toward gly residues. 9 LRR repeats span residues Asp98–Phe119, Ser121–Gln143, Met144–Pro166, Leu167–Leu187, Gln189–Leu210, Ser212–Ser234, Leu235–Met255, Gln257–Lys278, and Ile283–Thr304. Over residues His311–Asp322 the composition is skewed to basic and acidic residues. Positions His311–Asn348 are disordered. A Phosphoserine modification is found at Ser370. The interval His377 to Asp398 is disordered. Position 409 is a phosphoserine (Ser409). A compositionally biased stretch (polar residues) spans Leu516–Pro525. The disordered stretch occupies residues Leu516–Leu547. A phosphoserine mark is found at Ser532 and Ser536. The segment covering Pro533 to Ala543 has biased composition (polar residues). Thr568 is modified (phosphothreonine). In terms of domain architecture, Calponin-homology (CH) spans Met576–Pro692.

As to quaternary structure, interacts (via LRR repeats) with unphosphorylated DOCK8 (via DHR-2 domain); the interaction prevents the interaction between DOCK8 and CDC42.

Its subcellular location is the cytoplasm. Functionally, acts as a negative regulator of GTPase CDC42 by sequestering CDC42-guanine exchange factor DOCK8. Probably by preventing CDC42 activation, negatively regulates CD4(+) T-cell migration. This Homo sapiens (Human) protein is Leucine-rich repeat and calponin homology domain-containing protein 1 (LRCH1).